The chain runs to 159 residues: Fatty acid-binding protein homolog 1 (159 aa).

A signal peptide spans 1–17; it reads MCAKIALLLVLVGAASA.

Belongs to the calycin superfamily. Fatty-acid binding protein (FABP) family. As to expression, first detected in hypodermal precursor cells at the time of gastrulation. From the two-fold stage through to three-fold stages, expression is localized exclusively to hyp-7 but disappears in newly hatched L1s and subsequent developmental stages. Expression from L1 to adult stages is found in a single neuron in the ventral cord with a process into the nerve ring.

It localises to the secreted. Functionally, may play a role in sequestering potentially toxic fatty acids and their peroxidation products, or it may be involved in the maintenance of the impermeable lipid layer of the eggshell. The sequence is that of Fatty acid-binding protein homolog 1 (lbp-1) from Caenorhabditis elegans.